The following is a 327-amino-acid chain: Phenylalanine--tRNA ligase alpha subunit (327 aa).

Glu252 lines the Mg(2+) pocket.

Belongs to the class-II aminoacyl-tRNA synthetase family. Phe-tRNA synthetase alpha subunit type 1 subfamily. As to quaternary structure, tetramer of two alpha and two beta subunits. Requires Mg(2+) as cofactor.

Its subcellular location is the cytoplasm. It carries out the reaction tRNA(Phe) + L-phenylalanine + ATP = L-phenylalanyl-tRNA(Phe) + AMP + diphosphate + H(+). The chain is Phenylalanine--tRNA ligase alpha subunit from Haemophilus ducreyi (strain 35000HP / ATCC 700724).